A 214-amino-acid chain; its full sequence is Pyrrolidone-carboxylate peptidase (214 aa).

Residues Glu-80, Cys-143, and His-166 contribute to the active site.

It belongs to the peptidase C15 family. As to quaternary structure, homotetramer.

The protein localises to the cytoplasm. It catalyses the reaction Release of an N-terminal pyroglutamyl group from a polypeptide, the second amino acid generally not being Pro.. Functionally, removes 5-oxoproline from various penultimate amino acid residues except L-proline. This Escherichia fergusonii (strain ATCC 35469 / DSM 13698 / CCUG 18766 / IAM 14443 / JCM 21226 / LMG 7866 / NBRC 102419 / NCTC 12128 / CDC 0568-73) protein is Pyrrolidone-carboxylate peptidase.